A 303-amino-acid polypeptide reads, in one-letter code: Probable cell division protein WhiA (303 aa).

A DNA-binding region (H-T-H motif) is located at residues 272–303 (SIQQLADSLSRPLTKSGVNHRLRKINKIADEL).

Belongs to the WhiA family.

Its function is as follows. Involved in cell division and chromosome segregation. This chain is Probable cell division protein WhiA, found in Streptococcus sanguinis (strain SK36).